An 857-amino-acid polypeptide reads, in one-letter code: Leucine-rich repeat extensin-like protein 5 (857 aa).

Positions 1 to 31 (MKTKMMMKNTSLIFVLLFITFFFTSISYSLS) are cleaved as a signal peptide. The stretch at 32 to 53 (LTFNGDLSDNEVRLITQRQLLY) is one LRR 1 repeat. The N-linked (GlcNAc...) asparagine glycan is linked to Asn-98. LRR repeat units follow at residues 125–149 (IRTV…LGLL), 150–172 (TDLA…RFNR), 174–197 (KLLF…VLQL), 198–221 (PSLK…LFSK), 223–244 (LDAI…LGDS), 246–267 (VSVI…LGDM), 268–291 (RNLE…IGRL), 292–315 (KNVT…IGGM), 316–339 (VSME…ICQL), and 341–362 (RLEN…CLGL). N-linked (GlcNAc...) asparagine glycosylation is present at Asn-293. N-linked (GlcNAc...) asparagine glycosylation is present at Asn-344. 2 disordered regions span residues 406 to 776 (PPVV…EYSP) and 817 to 839 (YSPP…YEGP). Pro residues-rich tracts occupy residues 408–571 (VVVP…PTPI) and 579–768 (PIIP…PQSH). The contains the Ser-Pro(4) repeats stretch occupies residues 615–857 (SPPPSTPTPV…YASPPPPPFY (243 aa)).

Hydroxylated on proline residues in the S-P-P-P-P repeat. In terms of processing, O-glycosylated on hydroxyprolines. Expressed in roots, leaves and flowers.

The protein resides in the secreted. It is found in the cell wall. In terms of biological role, modulates cell morphogenesis by regulating cell wall formation and assembly, and/or growth polarization. The polypeptide is Leucine-rich repeat extensin-like protein 5 (LRX5) (Arabidopsis thaliana (Mouse-ear cress)).